A 193-amino-acid chain; its full sequence is Early light-induced protein 2, chloroplastic (193 aa).

A chloroplast-targeting transit peptide spans 1 to 43; sequence MATASFNMQSVFAAPSGVLTTRNIRNTNQLFFKRIAPVGVRCM. The segment at 46–80 is disordered; the sequence is GDPIKEDPSVPSTSTSATPPQMPQSPPPPVSKPKV. Residues 54–64 are compositionally biased toward low complexity; that stretch reads SVPSTSTSATP. Residues 65 to 76 show a composition bias toward pro residues; the sequence is PQMPQSPPPPVS. 3 consecutive transmembrane segments (helical) span residues 102 to 122, 129 to 149, and 173 to 193; these read LAMVGFVAAIAMELSKGENVF, GVGWFLGTTALLTLASMVPLF, and FAMLGLVALAFTEYVTGGTLV.

Belongs to the ELIP/psbS family.

The protein resides in the plastid. Its subcellular location is the chloroplast thylakoid membrane. In terms of biological role, probably involved in the integration of pigments into the mature light-harvesting pigment-protein complexes. Light-harvesting chlorophyll (LHC) a/b-binding protein required to ensure a high rate of chlorophyll accumulation during deetiolation in continuous high light. Involved in seed germination. May fulfill a photoprotective functions. Prevents excess accumulation of free chlorophyll by inhibiting the entire chlorophyll biosynthesis pathway (e.g. 5-aminolevulinate synthesis and Mg-protoporphyrin IX chelatase activity), and hence prevent photooxidative stress. The sequence is that of Early light-induced protein 2, chloroplastic from Arabidopsis thaliana (Mouse-ear cress).